Consider the following 168-residue polypeptide: Transcription antitermination protein NusB (168 aa).

This sequence belongs to the NusB family.

In terms of biological role, involved in transcription antitermination. Required for transcription of ribosomal RNA (rRNA) genes. Binds specifically to the boxA antiterminator sequence of the ribosomal RNA (rrn) operons. This is Transcription antitermination protein NusB from Bradyrhizobium sp. (strain ORS 278).